Consider the following 498-residue polypeptide: GTPase Der (498 aa).

2 consecutive EngA-type G domains span residues 3-166 (PVVA…FEEL) and 212-385 (IKFA…RSAT). GTP is bound by residues 9 to 16 (GRPNVGKS), 56 to 60 (DTGGI), 118 to 121 (NKTD), 218 to 225 (GRPNVGKS), 265 to 269 (DTAGV), and 330 to 333 (NKWD). Positions 386–470 (KRISTSMLTR…PIHIEFQEGD (85 aa)) constitute a KH-like domain.

This sequence belongs to the TRAFAC class TrmE-Era-EngA-EngB-Septin-like GTPase superfamily. EngA (Der) GTPase family. As to quaternary structure, associates with the 50S ribosomal subunit.

In terms of biological role, GTPase that plays an essential role in the late steps of ribosome biogenesis. The polypeptide is GTPase Der (Tolumonas auensis (strain DSM 9187 / NBRC 110442 / TA 4)).